The primary structure comprises 361 residues: Mycothiol acetyltransferase (361 aa).

N-acetyltransferase domains lie at 25-173 (PRVR…LPGS) and 195-361 (VTVL…AWKF). Glu59 contributes to the 1D-myo-inositol 2-(L-cysteinylamino)-2-deoxy-alpha-D-glucopyranoside binding site. An acetyl-CoA-binding site is contributed by 98-100 (LAV). 1D-myo-inositol 2-(L-cysteinylamino)-2-deoxy-alpha-D-glucopyranoside-binding residues include Glu229, Lys280, and Glu295. Acetyl-CoA is bound by residues 299–301 (IGL) and 306–312 (QGRGLGR). Tyr333 is a binding site for 1D-myo-inositol 2-(L-cysteinylamino)-2-deoxy-alpha-D-glucopyranoside. 338–343 (NAPAVH) contacts acetyl-CoA.

Belongs to the acetyltransferase family. MshD subfamily. As to quaternary structure, monomer.

It catalyses the reaction 1D-myo-inositol 2-(L-cysteinylamino)-2-deoxy-alpha-D-glucopyranoside + acetyl-CoA = mycothiol + CoA + H(+). In terms of biological role, catalyzes the transfer of acetyl from acetyl-CoA to desacetylmycothiol (Cys-GlcN-Ins) to form mycothiol. The chain is Mycothiol acetyltransferase from Corynebacterium kroppenstedtii (strain DSM 44385 / JCM 11950 / CIP 105744 / CCUG 35717).